A 159-amino-acid polypeptide reads, in one-letter code: GDP-mannose mannosyl hydrolase (159 aa).

Substrate contacts are provided by residues 2–3, Phe8, and Arg36; that span reads FL. The Nudix hydrolase domain maps to 13-153; that stretch reads RSTPLVSLDF…SRAYFLAEKR (141 aa). Positions 49, 69, and 122 each coordinate Mg(2+). Positions 50 to 71 match the Nudix box motif; it reads GRVQKDETLEAAFERLTMAELG.

It belongs to the Nudix hydrolase family. In terms of assembly, homodimer. Mg(2+) serves as cofactor.

The catalysed reaction is GDP-alpha-D-mannose + H2O = D-mannose + GDP + H(+). Functionally, hydrolyzes GDP-mannose. The sequence is that of GDP-mannose mannosyl hydrolase from Escherichia coli O157:H7.